Consider the following 182-residue polypeptide: Oligoribonuclease (182 aa).

The region spanning L8–L171 is the Exonuclease domain. Residue Y129 is part of the active site.

Belongs to the oligoribonuclease family.

The protein resides in the cytoplasm. Functionally, 3'-to-5' exoribonuclease specific for small oligoribonucleotides. This is Oligoribonuclease from Thiobacillus denitrificans (strain ATCC 25259 / T1).